The chain runs to 66 residues: uncharacterized protein (66 aa).

The next 2 membrane-spanning stretches (helical) occupy residues 6–26 (KIIMILGAVLLIIGAVLHFVG) and 39–59 (VTFFFPVVTCIIISVVLSILL).

It is found in the cell membrane. This is an uncharacterized protein from Bacillus subtilis (strain 168).